The primary structure comprises 422 residues: Probable tRNA pseudouridine synthase D 2 (422 aa).

Catalysis depends on Asp-89, which acts as the Nucleophile. One can recognise a TRUD domain in the interval 160–371 (GAPNYFDSQR…IYSERKILSI (212 aa)).

Belongs to the pseudouridine synthase TruD family.

It catalyses the reaction uridine(13) in tRNA = pseudouridine(13) in tRNA. Functionally, could be responsible for synthesis of pseudouridine from uracil-13 in transfer RNAs. This chain is Probable tRNA pseudouridine synthase D 2, found in Methanocaldococcus jannaschii (strain ATCC 43067 / DSM 2661 / JAL-1 / JCM 10045 / NBRC 100440) (Methanococcus jannaschii).